Consider the following 136-residue polypeptide: Acidic phospholipase A2 CC-PLA2-2 (136 aa).

Positions 1 to 16 (MRTLWIVAVWLMGVEG) are cleaved as a signal peptide. 7 disulfides stabilise this stretch: Cys-42/Cys-129, Cys-44/Cys-60, Cys-59/Cys-109, Cys-65/Cys-136, Cys-66/Cys-102, Cys-73/Cys-95, and Cys-90/Cys-100. 3 residues coordinate Ca(2+): Tyr-43, Gly-45, and Gly-47. Residue His-63 is part of the active site. Asp-64 serves as a coordination point for Ca(2+). Residue Asp-103 is part of the active site.

This sequence belongs to the phospholipase A2 family. Group II subfamily. D49 sub-subfamily. Ca(2+) serves as cofactor. Glycosylated (2.5%). In terms of tissue distribution, expressed by the venom gland.

The protein localises to the secreted. It catalyses the reaction a 1,2-diacyl-sn-glycero-3-phosphocholine + H2O = a 1-acyl-sn-glycero-3-phosphocholine + a fatty acid + H(+). Snake venom phospholipase A2 that inhibits blood coagulation and platelet aggregation induced by ADP and arachidonic acid. Inhibits tumor cell adhesion and migration in a dose-dependent manner. Abolishes the attachment of human brain microvascular endothelial cells (HBMEC) to fibrinogen (IC(50)=0.2 uM) and dramatically reduces its adhesion to fibronectin (IC(50)=0.3 uM), whereas no effect is observed on type I collagen, vitronectin or laminin 1. Also blocks the cell migration toward fibronectin and fibrinogen. These effects are not dependent of the catalytic activity, but are mediated by alpha-5/beta-1 (ITGA5/ITGB1) and alpha-v-containing (ITGAV) integrins. Also shows anti-angiogenic activity in chicken chorioallantoix membrane assay. Has a relatively high enzymatic activity. PLA2 catalyzes the calcium-dependent hydrolysis of the 2-acyl groups in 3-sn-phosphoglycerides. This chain is Acidic phospholipase A2 CC-PLA2-2, found in Cerastes cerastes (Horned desert viper).